Reading from the N-terminus, the 180-residue chain is Inner membrane-spanning protein YciB (180 aa).

5 helical membrane passes run 25 to 45, 49 to 69, 76 to 96, 118 to 138, and 150 to 170; these read QNAT…CYII, VSKL…ITLI, IKIK…MSGI, IILS…NEVV, and FKVF…LPLL.

It belongs to the YciB family.

The protein resides in the cell inner membrane. Plays a role in cell envelope biogenesis, maintenance of cell envelope integrity and membrane homeostasis. This Rickettsia prowazekii (strain Madrid E) protein is Inner membrane-spanning protein YciB.